A 514-amino-acid chain; its full sequence is Probable lysine--tRNA ligase, cytoplasmic (514 aa).

It belongs to the class-II aminoacyl-tRNA synthetase family. As to quaternary structure, homodimer.

Its subcellular location is the cytoplasm. It catalyses the reaction tRNA(Lys) + L-lysine + ATP = L-lysyl-tRNA(Lys) + AMP + diphosphate. This Vairimorpha ceranae (strain BRL01) (Microsporidian parasite) protein is Probable lysine--tRNA ligase, cytoplasmic.